A 180-amino-acid chain; its full sequence is Nucleoside triphosphate/diphosphate phosphatase (180 aa).

Catalysis depends on Arg26, which acts as the Proton donor. Mg(2+) contacts are provided by Asn90, Asp106, Asp108, Asp110, Asp123, and Glu126.

It belongs to the Ntdp family. Mg(2+) is required as a cofactor.

It carries out the reaction a ribonucleoside 5'-triphosphate + H2O = a ribonucleoside 5'-diphosphate + phosphate + H(+). The catalysed reaction is a ribonucleoside 5'-diphosphate + H2O = a ribonucleoside 5'-phosphate + phosphate + H(+). Has nucleoside phosphatase activity towards nucleoside triphosphates and nucleoside diphosphates. The protein is Nucleoside triphosphate/diphosphate phosphatase of Staphylococcus aureus (strain MRSA252).